The primary structure comprises 681 residues: Methionine--tRNA ligase (681 aa).

Positions 14–24 match the 'HIGH' region motif; sequence PYANGSIHLGH. Residues C145, C148, C158, and C161 each contribute to the Zn(2+) site. Residues 331 to 335 carry the 'KMSKS' region motif; sequence KMSKS. K334 is a binding site for ATP. Residues 579–681 form the tRNA-binding domain; the sequence is TFAAVDLRVA…SGAKPGQRIK (103 aa).

It belongs to the class-I aminoacyl-tRNA synthetase family. MetG type 1 subfamily. As to quaternary structure, homodimer. Zn(2+) is required as a cofactor.

It is found in the cytoplasm. The catalysed reaction is tRNA(Met) + L-methionine + ATP = L-methionyl-tRNA(Met) + AMP + diphosphate. In terms of biological role, is required not only for elongation of protein synthesis but also for the initiation of all mRNA translation through initiator tRNA(fMet) aminoacylation. This Pseudomonas putida (strain W619) protein is Methionine--tRNA ligase.